Consider the following 245-residue polypeptide: Enolase-phosphatase E1 (245 aa).

It belongs to the HAD-like hydrolase superfamily. MasA/MtnC family. Monomer. Mg(2+) is required as a cofactor.

It carries out the reaction 5-methylsulfanyl-2,3-dioxopentyl phosphate + H2O = 1,2-dihydroxy-5-(methylsulfanyl)pent-1-en-3-one + phosphate. Its pathway is amino-acid biosynthesis; L-methionine biosynthesis via salvage pathway; L-methionine from S-methyl-5-thio-alpha-D-ribose 1-phosphate: step 3/6. It functions in the pathway amino-acid biosynthesis; L-methionine biosynthesis via salvage pathway; L-methionine from S-methyl-5-thio-alpha-D-ribose 1-phosphate: step 4/6. Its function is as follows. Bifunctional enzyme that catalyzes the enolization of 2,3-diketo-5-methylthiopentyl-1-phosphate (DK-MTP-1-P) into the intermediate 2-hydroxy-3-keto-5-methylthiopentenyl-1-phosphate (HK-MTPenyl-1-P), which is then dephosphorylated to form the acireductone 1,2-dihydroxy-3-keto-5-methylthiopentene (DHK-MTPene). In Parasynechococcus marenigrum (strain WH8102), this protein is Enolase-phosphatase E1.